A 402-amino-acid chain; its full sequence is Plasminogen activator inhibitor 1 (402 aa).

Residues 1-23 (MRMSPVFACLALGLALIFGEGSA) form the signal peptide. Residues asparagine 232, asparagine 288, and asparagine 352 are each glycosylated (N-linked (GlcNAc...) asparagine).

The protein belongs to the serpin family. Forms a heterodimer with TMPRSS7. Interacts with VTN. Binds LRP1B; binding is followed by internalization and degradation. Interacts with PPP1CB. In complex with PLAU/uPA, interacts with PLAUR/uPAR. Interacts with SORL1 and LRP1, either alone or in complex with PLAU; these interactions are abolished in the presence of LRPAP1/RAP. The ternary complex composed of PLAUR-PLAU-PAI1 also interacts with SORL1. Interacts with PLAT/tPA. Also interacts with SORL1, when complexed to PLAT/tPA. In terms of tissue distribution, vascular endothelial cells may be the primary site of synthesis of plasma PAI1.

It is found in the secreted. Its function is as follows. Serine protease inhibitor. Inhibits TMPRSS7. Is a primary inhibitor of tissue-type plasminogen activator (PLAT) and urokinase-type plasminogen activator (PLAU). As PLAT inhibitor, it is required for fibrinolysis down-regulation and is responsible for the controlled degradation of blood clots. As PLAU inhibitor, it is involved in the regulation of cell adhesion and spreading. Acts as a regulator of cell migration, independently of its role as protease inhibitor. It is required for stimulation of keratinocyte migration during cutaneous injury repair. It is involved in cellular and replicative senescence. Plays a role in alveolar type 2 cells senescence in the lung. Is involved in the regulation of cementogenic differentiation of periodontal ligament stem cells, and regulates odontoblast differentiation and dentin formation during odontogenesis. The polypeptide is Plasminogen activator inhibitor 1 (SERPINE1) (Bos taurus (Bovine)).